The sequence spans 1173 residues: Fas-binding factor 1 (1173 aa).

Positions M17 to Y168 are disordered. The span at K46–D56 shows a compositional bias: basic and acidic residues. A compositionally biased stretch (low complexity) spans A80–D93. S172 carries the phosphoserine modification. 2 disordered regions span residues L180 to P225 and T241 to E566. Low complexity predominate over residues S206–S216. Basic and acidic residues-rich tracts occupy residues D247–D258 and T287–Y299. Polar residues-rich tracts occupy residues V331–S345, S396–S411, V468–L477, and T533–T544. Coiled-coil stretches lie at residues T617 to S742, Q808 to C917, and C975 to Q1057. Residue K1002 forms a Glycyl lysine isopeptide (Lys-Gly) (interchain with G-Cter in SUMO2) linkage. The disordered stretch occupies residues A1091–P1124. A compositionally biased stretch (low complexity) spans A1110–P1124.

Interacts with PARD3. May interact with FAS cytoplasmic domain. Interacts with TRAPPC14. Broadly expressed.

Its subcellular location is the cytoplasm. The protein resides in the cytoskeleton. The protein localises to the microtubule organizing center. It is found in the centrosome. It localises to the centriole. Its subcellular location is the spindle pole. The protein resides in the cell junction. Keratin-binding protein required for epithelial cell polarization. Involved in apical junction complex (AJC) assembly via its interaction with PARD3. Required for ciliogenesis. This Mus musculus (Mouse) protein is Fas-binding factor 1 (Fbf1).